A 184-amino-acid polypeptide reads, in one-letter code: Photosystem I assembly protein Ycf4 (184 aa).

The next 2 helical transmembrane spans lie at 22–42 (LCWA…GTSS) and 57–77 (ILFF…LFIS).

It belongs to the Ycf4 family.

The protein resides in the plastid. It is found in the chloroplast thylakoid membrane. Seems to be required for the assembly of the photosystem I complex. This is Photosystem I assembly protein Ycf4 from Daucus carota (Wild carrot).